A 304-amino-acid chain; its full sequence is Sulfate adenylyltransferase subunit 2 (304 aa).

It belongs to the PAPS reductase family. CysD subfamily. Heterodimer composed of CysD, the smaller subunit, and CysN.

The enzyme catalyses sulfate + ATP + H(+) = adenosine 5'-phosphosulfate + diphosphate. The protein operates within sulfur metabolism; hydrogen sulfide biosynthesis; sulfite from sulfate: step 1/3. Its function is as follows. With CysN forms the ATP sulfurylase (ATPS) that catalyzes the adenylation of sulfate producing adenosine 5'-phosphosulfate (APS) and diphosphate, the first enzymatic step in sulfur assimilation pathway. APS synthesis involves the formation of a high-energy phosphoric-sulfuric acid anhydride bond driven by GTP hydrolysis by CysN coupled to ATP hydrolysis by CysD. This chain is Sulfate adenylyltransferase subunit 2, found in Acinetobacter baylyi (strain ATCC 33305 / BD413 / ADP1).